The sequence spans 67 residues: Probable archaeal histone 3 (67 aa).

Interaction with DNA stretches follow at residues 20–22 (RVS) and 54–57 (KTVK).

This sequence belongs to the archaeal histone HMF family. Homodimer or heterodimer with another histone. Dimers then assemble into higher oligomers, with the DNA wrapped around the protein core.

It is found in the cytoplasm. The protein localises to the chromosome. Functionally, binds and compact DNA (95 to 150 base pairs) to form nucleosome-like structures that contain positive DNA supercoils. Increases the resistance of DNA to thermal denaturation (in vitro). This Methanocaldococcus jannaschii (strain ATCC 43067 / DSM 2661 / JAL-1 / JCM 10045 / NBRC 100440) (Methanococcus jannaschii) protein is Probable archaeal histone 3.